Here is a 364-residue protein sequence, read N- to C-terminus: UDP-3-O-acylglucosamine N-acyltransferase (364 aa).

Catalysis depends on His267, which acts as the Proton acceptor.

Belongs to the transferase hexapeptide repeat family. LpxD subfamily. As to quaternary structure, homotrimer.

It catalyses the reaction a UDP-3-O-[(3R)-3-hydroxyacyl]-alpha-D-glucosamine + a (3R)-hydroxyacyl-[ACP] = a UDP-2-N,3-O-bis[(3R)-3-hydroxyacyl]-alpha-D-glucosamine + holo-[ACP] + H(+). It participates in bacterial outer membrane biogenesis; LPS lipid A biosynthesis. Functionally, catalyzes the N-acylation of UDP-3-O-acylglucosamine using 3-hydroxyacyl-ACP as the acyl donor. Is involved in the biosynthesis of lipid A, a phosphorylated glycolipid that anchors the lipopolysaccharide to the outer membrane of the cell. The protein is UDP-3-O-acylglucosamine N-acyltransferase of Bordetella petrii (strain ATCC BAA-461 / DSM 12804 / CCUG 43448).